The chain runs to 467 residues: Chromosomal replication initiator protein DnaA (467 aa).

Positions 1-80 (MTSELWHQCL…APRISLKIGS (80 aa)) are domain I, interacts with DnaA modulators. A domain II region spans residues 80-130 (SITGNSKGQQASKDSAVGATRTTAPSRPVIADVAPSGERNVTVEGAIKHES). A domain III, AAA+ region region spans residues 131–347 (YLNPTFTFET…GALKLVIANA (217 aa)). ATP is bound by residues glycine 175, glycine 177, lysine 178, and threonine 179. Positions 348–467 (HFTGQEITPA…YQNFMRMLTS (120 aa)) are domain IV, binds dsDNA.

This sequence belongs to the DnaA family. In terms of assembly, oligomerizes as a right-handed, spiral filament on DNA at oriC.

It localises to the cytoplasm. Its function is as follows. Plays an essential role in the initiation and regulation of chromosomal replication. ATP-DnaA binds to the origin of replication (oriC) to initiate formation of the DNA replication initiation complex once per cell cycle. Binds the DnaA box (a 9 base pair repeat at the origin) and separates the double-stranded (ds)DNA. Forms a right-handed helical filament on oriC DNA; dsDNA binds to the exterior of the filament while single-stranded (ss)DNA is stabiized in the filament's interior. The ATP-DnaA-oriC complex binds and stabilizes one strand of the AT-rich DNA unwinding element (DUE), permitting loading of DNA polymerase. After initiation quickly degrades to an ADP-DnaA complex that is not apt for DNA replication. Binds acidic phospholipids. This Hahella chejuensis (strain KCTC 2396) protein is Chromosomal replication initiator protein DnaA.